Consider the following 399-residue polypeptide: DNA polymerase IV (399 aa).

A UmuC domain is found at 5–187 (ILHCDLNNFY…LPVEALLYVG (183 aa)). Positions 9 and 105 each coordinate Mg(2+). E106 is a catalytic residue.

This sequence belongs to the DNA polymerase type-Y family. As to quaternary structure, monomer. Mg(2+) is required as a cofactor.

The protein resides in the cytoplasm. The catalysed reaction is DNA(n) + a 2'-deoxyribonucleoside 5'-triphosphate = DNA(n+1) + diphosphate. Poorly processive, error-prone DNA polymerase involved in untargeted mutagenesis. Copies undamaged DNA at stalled replication forks, which arise in vivo from mismatched or misaligned primer ends. These misaligned primers can be extended by PolIV. Exhibits no 3'-5' exonuclease (proofreading) activity. May be involved in translesional synthesis, in conjunction with the beta clamp from PolIII. The protein is DNA polymerase IV of Acetivibrio thermocellus (strain ATCC 27405 / DSM 1237 / JCM 9322 / NBRC 103400 / NCIMB 10682 / NRRL B-4536 / VPI 7372) (Clostridium thermocellum).